We begin with the raw amino-acid sequence, 810 residues long: Probable inorganic carbon transporter subunit DabA (810 aa).

Residues cysteine 347, aspartate 349, histidine 509, and cysteine 524 each coordinate Zn(2+).

It belongs to the inorganic carbon transporter (TC 9.A.2) DabA family. Forms a complex with DabB. It depends on Zn(2+) as a cofactor.

It localises to the cell inner membrane. Its function is as follows. Part of an energy-coupled inorganic carbon pump. The polypeptide is Probable inorganic carbon transporter subunit DabA (Marinomonas sp. (strain MWYL1)).